Here is a 198-residue protein sequence, read N- to C-terminus: Protein GrpE (198 aa).

This sequence belongs to the GrpE family. Homodimer.

The protein localises to the cytoplasm. Participates actively in the response to hyperosmotic and heat shock by preventing the aggregation of stress-denatured proteins, in association with DnaK and GrpE. It is the nucleotide exchange factor for DnaK and may function as a thermosensor. Unfolded proteins bind initially to DnaJ; upon interaction with the DnaJ-bound protein, DnaK hydrolyzes its bound ATP, resulting in the formation of a stable complex. GrpE releases ADP from DnaK; ATP binding to DnaK triggers the release of the substrate protein, thus completing the reaction cycle. Several rounds of ATP-dependent interactions between DnaJ, DnaK and GrpE are required for fully efficient folding. The chain is Protein GrpE from Lysinibacillus sphaericus (Bacillus sphaericus).